The chain runs to 220 residues: Ribosomal RNA large subunit methyltransferase E (220 aa).

Residues 1–10 are compositionally biased toward basic and acidic residues; sequence MSRSGKDPGK. The tract at residues 1–24 is disordered; sequence MSRSGKDPGKRVKTARKRSASSTR. The S-adenosyl-L-methionine site is built by Gly75, Trp77, Asp94, Asp110, and Asp134. The active-site Proton acceptor is Lys174.

Belongs to the class I-like SAM-binding methyltransferase superfamily. RNA methyltransferase RlmE family.

The protein localises to the cytoplasm. The catalysed reaction is uridine(2552) in 23S rRNA + S-adenosyl-L-methionine = 2'-O-methyluridine(2552) in 23S rRNA + S-adenosyl-L-homocysteine + H(+). Its function is as follows. Specifically methylates the uridine in position 2552 of 23S rRNA at the 2'-O position of the ribose in the fully assembled 50S ribosomal subunit. This Erythrobacter litoralis (strain HTCC2594) protein is Ribosomal RNA large subunit methyltransferase E.